The primary structure comprises 341 residues: S-adenosylmethionine:tRNA ribosyltransferase-isomerase (341 aa).

The protein belongs to the QueA family. As to quaternary structure, monomer.

The protein resides in the cytoplasm. The catalysed reaction is 7-aminomethyl-7-carbaguanosine(34) in tRNA + S-adenosyl-L-methionine = epoxyqueuosine(34) in tRNA + adenine + L-methionine + 2 H(+). It functions in the pathway tRNA modification; tRNA-queuosine biosynthesis. Transfers and isomerizes the ribose moiety from AdoMet to the 7-aminomethyl group of 7-deazaguanine (preQ1-tRNA) to give epoxyqueuosine (oQ-tRNA). The chain is S-adenosylmethionine:tRNA ribosyltransferase-isomerase from Acetivibrio thermocellus (strain ATCC 27405 / DSM 1237 / JCM 9322 / NBRC 103400 / NCIMB 10682 / NRRL B-4536 / VPI 7372) (Clostridium thermocellum).